We begin with the raw amino-acid sequence, 1154 residues long: BEACH domain-containing protein lvsF (1154 aa).

2 disordered regions span residues 92–123 (HLPTPQPIPQSILSPSKPTPTPTPPIVVEQPS) and 139–167 (TSKVTTPTPPTPTPTPPTPQPTSIAPTPT). The span at 145-158 (PTPPTPTPTPPTPQ) shows a compositional bias: pro residues. The BEACH-type PH domain occupies 289 to 384 (DMNERNILEL…TRNQVYDLLV (96 aa)). Residues 389-697 (TNIMHINEQA…QIFKTPHPQR (309 aa)) form the BEACH domain. 3 disordered regions span residues 554–575 (SFESSSSSRNGGGGDDDDNFEN), 739–762 (NNLNNNNNNNNNNNSNSNSNLNNN), and 779–825 (NSLN…ENLN). Composition is skewed to low complexity over residues 779 to 788 (NSLNNENNEN) and 795 to 822 (NSNSNSSDNIKNSNGFENNDNNFNNENE). WD repeat units follow at residues 858-897 (LHKDKISALYLSNNSETIYSVSLDSCLKIYSLKEKRQIRS), 900-939 (LCNLALSSFQLSKDEKYIIIGSWDNNIYVYSVGNGSISYS), 942-980 (GHSDAVSCLKLHNNNILVSGSWDSSVKVWRTHRQSNGAI), 992-1031 (DSDTEIRSIDISSNGTIFCAGSSDGYLYFYDLLTLQLIRR), 1034-1074 (CFFD…FSFK), 1076-1110 (KGEIHCLDSDGSSLIIGTDRGLCLWSLTTGTEIKD), and 1119-1154 (SSNESIHSLNVSINQSSNKPILLTGTEAGSISIWQQ).

In Dictyostelium discoideum (Social amoeba), this protein is BEACH domain-containing protein lvsF (lvsF).